The chain runs to 100 residues: MKVTDVRLRKIQTDGRMKALVSITLDEAFVIHDLRVIEGNSGLFVAMPSKRTPDGEFRDIAHPINSDMRQEIQDAVMKVYDETDEVVPDKNATSEDSEEA.

It belongs to the SpoVG family.

In terms of biological role, could be involved in septation. This chain is Putative septation protein SpoVG, found in Staphylococcus aureus (strain JH1).